The following is a 482-amino-acid chain: Cardiolipin synthase (482 aa).

Helical transmembrane passes span 4 to 24 (LAYL…VTVF) and 34 to 54 (WAWL…YLIF). PLD phosphodiesterase domains follow at residues 217–244 (LNYR…GDEY) and 395–422 (DNGF…DFRS). Catalysis depends on residues His-222, Lys-224, Asp-229, His-400, Lys-402, and Asp-407.

Belongs to the phospholipase D family. Cardiolipin synthase subfamily.

Its subcellular location is the cell membrane. The catalysed reaction is 2 a 1,2-diacyl-sn-glycero-3-phospho-(1'-sn-glycerol) = a cardiolipin + glycerol. Its function is as follows. Catalyzes the reversible phosphatidyl group transfer from one phosphatidylglycerol molecule to another to form cardiolipin (CL) (diphosphatidylglycerol) and glycerol. The protein is Cardiolipin synthase (cls) of Listeria monocytogenes serotype 4a (strain HCC23).